A 349-amino-acid polypeptide reads, in one-letter code: D-arabinitol dehydrogenase 1 (349 aa).

Zn(2+) is bound by residues cysteine 46, histidine 67, cysteine 97, cysteine 100, cysteine 103, cysteine 111, and glutamate 151.

Belongs to the zinc-containing alcohol dehydrogenase family. It depends on Zn(2+) as a cofactor.

Its subcellular location is the cell projection. The catalysed reaction is D-arabinitol + NADP(+) = D-xylulose + NADPH + H(+). It carries out the reaction D-arabinitol + NADP(+) = D-ribulose + NADPH + H(+). Functionally, D-arabinitol dehydrogenase which mostly produces D-arabinitol in haustoria, the appendages of the parasitic fungus that penetrate the host's tissue and draws nutrients from it. D-arabinitol accumulation may serve as a carbohydrate storage compound. D-arabinitol is also capable of quenching reactive oxygen species involved in host plant defense reactions, thus providing protection for the rust fungus during the pathogenic interaction. This is D-arabinitol dehydrogenase 1 (ARD1) from Uromyces fabae (Rust fungus).